We begin with the raw amino-acid sequence, 408 residues long: GTPase Obg (408 aa).

Residues 1 to 159 (MKFFDEARIE…RNLHLELKVL (159 aa)) form the Obg domain. Residues 160 to 334 (ADVGLLGMPN…LIFALQDFLD (175 aa)) enclose the OBG-type G domain. GTP is bound by residues 166–173 (GMPNAGKS), 191–195 (FTTLQ), 213–216 (DIPG), 284–287 (NKLD), and 315–317 (SAL). Mg(2+) is bound by residues Ser173 and Thr193. The tract at residues 385 to 408 (AEDALAEDALDDDADGEDADPNAR) is disordered.

It belongs to the TRAFAC class OBG-HflX-like GTPase superfamily. OBG GTPase family. In terms of assembly, monomer. Mg(2+) is required as a cofactor.

It localises to the cytoplasm. An essential GTPase which binds GTP, GDP and possibly (p)ppGpp with moderate affinity, with high nucleotide exchange rates and a fairly low GTP hydrolysis rate. Plays a role in control of the cell cycle, stress response, ribosome biogenesis and in those bacteria that undergo differentiation, in morphogenesis control. This is GTPase Obg from Azoarcus sp. (strain BH72).